Consider the following 172-residue polypeptide: Large ribosomal subunit protein uL10 (172 aa).

This sequence belongs to the universal ribosomal protein uL10 family. As to quaternary structure, part of the ribosomal stalk of the 50S ribosomal subunit. The N-terminus interacts with L11 and the large rRNA to form the base of the stalk. The C-terminus forms an elongated spine to which L12 dimers bind in a sequential fashion forming a multimeric L10(L12)X complex.

In terms of biological role, forms part of the ribosomal stalk, playing a central role in the interaction of the ribosome with GTP-bound translation factors. This Rhizobium meliloti (strain 1021) (Ensifer meliloti) protein is Large ribosomal subunit protein uL10.